A 384-amino-acid polypeptide reads, in one-letter code: L-cysteine:1D-myo-inositol 2-amino-2-deoxy-alpha-D-glucopyranoside ligase (384 aa).

Cys16 provides a ligand contact to Zn(2+). L-cysteinyl-5'-AMP contacts are provided by residues 16 to 19, Thr31, and 54 to 56; these read CGIT and NVT. The 'HIGH' region motif lies at 18–28; the sequence is ITPYDATHLGH. The 'ERGGDP' region motif lies at 159-164; sequence QSGGDP. Residue Trp199 coordinates L-cysteinyl-5'-AMP. A Zn(2+)-binding site is contributed by Cys203. 221–223 contributes to the L-cysteinyl-5'-AMP binding site; the sequence is GSD. A Zn(2+)-binding site is contributed by His228. Residue Ile255 coordinates L-cysteinyl-5'-AMP. The 'KMSKS' region signature appears at 261 to 265; it reads KMSKS.

This sequence belongs to the class-I aminoacyl-tRNA synthetase family. MshC subfamily. Monomer. Zn(2+) serves as cofactor.

It catalyses the reaction 1D-myo-inositol 2-amino-2-deoxy-alpha-D-glucopyranoside + L-cysteine + ATP = 1D-myo-inositol 2-(L-cysteinylamino)-2-deoxy-alpha-D-glucopyranoside + AMP + diphosphate + H(+). Catalyzes the ATP-dependent condensation of GlcN-Ins and L-cysteine to form L-Cys-GlcN-Ins. The protein is L-cysteine:1D-myo-inositol 2-amino-2-deoxy-alpha-D-glucopyranoside ligase of Mycobacterium leprae (strain Br4923).